Consider the following 229-residue polypeptide: uncharacterized protein (229 aa).

This is an uncharacterized protein from Sulfolobus islandicus filamentous virus (isolate Iceland/Hveragerdi) (SIFV).